A 315-amino-acid polypeptide reads, in one-letter code: Olfactory receptor 3A3 (315 aa).

Over 1 to 28 (MESEAGTNRTAVAEFMLLGLVQTEEMQS) the chain is Extracellular. The N-linked (GlcNAc...) asparagine glycan is linked to Asn8. Residues 29–52 (VIFVLLLFAYLVTTGGNLSILAAI) form a helical membrane-spanning segment. At 53–60 (LVEPKLHT) the chain is on the cytoplasmic side. The helical transmembrane segment at 61-82 (PMYFFLGNLSVLDVGCITVTVP) threads the bilayer. The Extracellular portion of the chain corresponds to 83–103 (AMLGRLLSHKSTISYDACLSQ). Residues Cys100 and Cys192 are joined by a disulfide bond. The helical transmembrane segment at 104-123 (LFFFHLLAGMDCFLLTAMAY) threads the bilayer. At 124–143 (DRFLAICRPLTYSTHMNQRV) the chain is on the cytoplasmic side. The helical transmembrane segment at 144–161 (QRMLVAVSWTCAFTNALT) threads the bilayer. Over 162–199 (HTIALTTLNFCGPSVINHFYCDLPQLFQLSCSSTQLNE) the chain is Extracellular. The chain crosses the membrane as a helical span at residues 200-222 (LLLFVAAAVMAVAPLVFISVSYA). Residues 223-239 (HVVAAVLQIHSAEGRKK) are Cytoplasmic-facing. Residues 240–262 (AFSTCGSHLTVVGIFYGTGVFSY) traverse the membrane as a helical segment. The Extracellular portion of the chain corresponds to 263-275 (MRLGSVESSDKDK). The chain crosses the membrane as a helical span at residues 276–295 (GVGVFMTVINPMLNPLIYSL). At 296–315 (RNTDVQGALCQLLVVKRSLT) the chain is on the cytoplasmic side.

It belongs to the G-protein coupled receptor 1 family.

Its subcellular location is the cell membrane. Odorant receptor. The sequence is that of Olfactory receptor 3A3 (OR3A3) from Pan troglodytes (Chimpanzee).